A 271-amino-acid chain; its full sequence is MKVLQLIALTALVSSCVAASAADPSGLAKTKSDVDVLSRVLADHEQTNRSLRRYDLEGLDSVNSNREERNSITMVDDVVTKASGLVDDVMGKTDDVVGKAGQFGKVPTKLRDVATKNMDKIKEMTARSALVKTLTGRYDYAEKLSLSALKQLDDIEKVRAVDIKKGIKGSKETPDGMRRVIEPFEGMKVAPKKFLESHVGRADQRYGKDGSRLLSANVVMRLNDKGEKQILLISSSNPKKGDFLLPKGGWDKGEDVKKAALREVIEEGGVR.

The signal sequence occupies residues 1 to 18; it reads MKVLQLIALTALVSSCVA. Positions 49-69 match the RxLR-dEER motif; the sequence is RSLRRYDLEGLDSVNSNREER. The 60-residue stretch at 212–271 folds into the Nudix hydrolase domain; that stretch reads RLLSANVVMRLNDKGEKQILLISSSNPKKGDFLLPKGGWDKGEDVKKAALREVIEEGGVR. Residues 248 to 269 carry the Nudix box motif; that stretch reads GGWDKGEDVKKAALREVIEEGG.

In the N-terminal section; belongs to the RxLR effector family. This sequence in the C-terminal section; belongs to the Nudix hydrolase family.

The protein resides in the secreted. It localises to the host cytoplasm. The protein localises to the host nucleus. In terms of biological role, effector that enhances P.infestans colonization of Nicotiana benthamiana leaves. The protein is RxLR effector protein PITG_15679 of Phytophthora infestans (strain T30-4) (Potato late blight agent).